Here is a 431-residue protein sequence, read N- to C-terminus: Glucose-1-phosphate adenylyltransferase (431 aa).

K39 is a beta-D-fructose 1,6-bisphosphate binding site. AMP-binding residues include R40, H46, and R52. Y114 serves as a coordination point for alpha-D-glucose 1-phosphate. R130 is an AMP binding site. Alpha-D-glucose 1-phosphate contacts are provided by residues G179, 194-195 (EK), and S212. The AMP site is built by E370 and R386. Residues 419–423 (REMLR) and 429–431 (QER) each bind beta-D-fructose 1,6-bisphosphate.

It belongs to the bacterial/plant glucose-1-phosphate adenylyltransferase family. As to quaternary structure, homotetramer.

The catalysed reaction is alpha-D-glucose 1-phosphate + ATP + H(+) = ADP-alpha-D-glucose + diphosphate. It functions in the pathway glycan biosynthesis; glycogen biosynthesis. With respect to regulation, allosterically activated by fructose-1,6-bisphosphate (F16BP) and inhibited by AMP. Functionally, involved in the biosynthesis of ADP-glucose, a building block required for the elongation reactions to produce glycogen. Catalyzes the reaction between ATP and alpha-D-glucose 1-phosphate (G1P) to produce pyrophosphate and ADP-Glc. This is Glucose-1-phosphate adenylyltransferase from Escherichia coli O7:K1 (strain IAI39 / ExPEC).